We begin with the raw amino-acid sequence, 424 residues long: Arogenate dehydratase 3, chloroplastic (424 aa).

A chloroplast-targeting transit peptide spans 1-24 (MRTLLPSHTPATVTTAARRRHVIH). Residues 57–71 (EQSESLSSNSNGSSS) are compositionally biased toward low complexity. The tract at residues 57–77 (EQSESLSSNSNGSSSYHVSAV) is disordered. Residues 122 to 299 (RVAYQGVPGA…NVTRFVMLAR (178 aa)) form the Prephenate dehydratase domain. The region spanning 313 to 404 (SIVFAHEKGT…SFLRVLGSYP (92 aa)) is the ACT domain.

In terms of assembly, may interact with GPA1. As to expression, expressed in roots, leaves, stems, flowers and siliques.

The protein resides in the plastid. It is found in the chloroplast stroma. It carries out the reaction L-arogenate + H(+) = L-phenylalanine + CO2 + H2O. It functions in the pathway amino-acid biosynthesis; L-phenylalanine biosynthesis; L-phenylalanine from L-arogenate: step 1/1. Functionally, converts the prephenate produced from the shikimate-chorismate pathway into phenylalanine. Together with GCR1 and GPA1, required for blue light-mediated synthesis of phenylpyruvate and subsequently of phenylalanine (Phe), in etiolated seedlings. This chain is Arogenate dehydratase 3, chloroplastic, found in Arabidopsis thaliana (Mouse-ear cress).